Here is a 155-residue protein sequence, read N- to C-terminus: Small ribosomal subunit protein uS7 (155 aa).

The protein belongs to the universal ribosomal protein uS7 family. In terms of assembly, part of the 30S ribosomal subunit. Contacts proteins S9 and S11.

One of the primary rRNA binding proteins, it binds directly to 16S rRNA where it nucleates assembly of the head domain of the 30S subunit. Is located at the subunit interface close to the decoding center, probably blocks exit of the E-site tRNA. The polypeptide is Small ribosomal subunit protein uS7 (Mycoplasma capricolum subsp. capricolum (strain California kid / ATCC 27343 / NCTC 10154)).